We begin with the raw amino-acid sequence, 209 residues long: A-type ATP synthase subunit D (209 aa).

This sequence belongs to the V-ATPase D subunit family. In terms of assembly, has multiple subunits with at least A(3), B(3), C, D, E, F, H, I and proteolipid K(x).

It is found in the cell membrane. Functionally, component of the A-type ATP synthase that produces ATP from ADP in the presence of a proton gradient across the membrane. In Thermoplasma volcanium (strain ATCC 51530 / DSM 4299 / JCM 9571 / NBRC 15438 / GSS1), this protein is A-type ATP synthase subunit D.